The chain runs to 162 residues: Nucleotide-binding protein A2cp1_0112 (162 aa).

This sequence belongs to the YajQ family.

Functionally, nucleotide-binding protein. This chain is Nucleotide-binding protein A2cp1_0112, found in Anaeromyxobacter dehalogenans (strain 2CP-1 / ATCC BAA-258).